We begin with the raw amino-acid sequence, 220 residues long: Adenylate kinase (220 aa).

12–17 (GAGKGT) serves as a coordination point for ATP. The tract at residues 32 to 62 (STGDIFRDIVKKENDELGKKIKEIMERGELV) is NMP. Residues threonine 33, arginine 38, 60–62 (ELV), 88–91 (GYPR), and glutamine 95 contribute to the AMP site. The tract at residues 129 to 166 (ARRICPKCGRIYNLISLPPKEDELCDDCKVKLVQREDD) is LID. Arginine 130 contacts ATP. Residues cysteine 133 and cysteine 136 each contribute to the Zn(2+) site. 139–140 (IY) lines the ATP pocket. Zn(2+) contacts are provided by cysteine 153 and cysteine 156. AMP-binding residues include arginine 163 and arginine 174. ATP is bound at residue isoleucine 202.

Belongs to the adenylate kinase family. In terms of assembly, monomer.

Its subcellular location is the cytoplasm. It carries out the reaction AMP + ATP = 2 ADP. The protein operates within purine metabolism; AMP biosynthesis via salvage pathway; AMP from ADP: step 1/1. Functionally, catalyzes the reversible transfer of the terminal phosphate group between ATP and AMP. Plays an important role in cellular energy homeostasis and in adenine nucleotide metabolism. The chain is Adenylate kinase from Thermotoga petrophila (strain ATCC BAA-488 / DSM 13995 / JCM 10881 / RKU-1).